The primary structure comprises 285 residues: Casein kinase II subunit beta-2 (285 aa).

Residues 226–285 are disordered; sequence FKDAEDEAELDDDDEEEEEEEEEEEELAAMDEAEGAQQQHAAAAAGTATGGVAAGGEGVH. Acidic residues predominate over residues 229–259; that stretch reads AEDEAELDDDDEEEEEEEEEEEELAAMDEAE. The span at 260 to 272 shows a compositional bias: low complexity; sequence GAQQQHAAAAAGT. The span at 273-285 shows a compositional bias: gly residues; that stretch reads ATGGVAAGGEGVH.

It belongs to the casein kinase 2 subunit beta family. Tetramer composed of two alpha chains, one beta chain and one beta' chain. Phosphorylated by alpha subunit.

In terms of biological role, regulatory subunit of casein kinase II/CK2. As part of the kinase complex regulates the basal catalytic activity of the alpha subunit a constitutively active serine/threonine-protein kinase that phosphorylates a large number of substrates containing acidic residues C-terminal to the phosphorylated serine or threonine. The polypeptide is Casein kinase II subunit beta-2 (ckb-2) (Neurospora crassa (strain ATCC 24698 / 74-OR23-1A / CBS 708.71 / DSM 1257 / FGSC 987)).